The primary structure comprises 282 residues: Biotin synthase (282 aa).

A Radical SAM core domain is found at 1 to 228 (MQEIFLCSIS…NARLMAAGGR (228 aa)). C17, C21, and C24 together coordinate [4Fe-4S] cluster. Residues C61, C96, C154, and R221 each coordinate [2Fe-2S] cluster.

This sequence belongs to the radical SAM superfamily. Biotin synthase family. As to quaternary structure, homodimer. The cofactor is [4Fe-4S] cluster. [2Fe-2S] cluster is required as a cofactor.

It catalyses the reaction (4R,5S)-dethiobiotin + (sulfur carrier)-SH + 2 reduced [2Fe-2S]-[ferredoxin] + 2 S-adenosyl-L-methionine = (sulfur carrier)-H + biotin + 2 5'-deoxyadenosine + 2 L-methionine + 2 oxidized [2Fe-2S]-[ferredoxin]. Its pathway is cofactor biosynthesis; biotin biosynthesis; biotin from 7,8-diaminononanoate: step 2/2. Its function is as follows. Catalyzes the conversion of dethiobiotin (DTB) to biotin by the insertion of a sulfur atom into dethiobiotin via a radical-based mechanism. The sequence is that of Biotin synthase from Helicobacter acinonychis (strain Sheeba).